The sequence spans 494 residues: Guanosine-5'-triphosphate,3'-diphosphate pyrophosphatase (494 aa).

It belongs to the GppA/Ppx family. GppA subfamily.

It catalyses the reaction guanosine 3'-diphosphate 5'-triphosphate + H2O = guanosine 3',5'-bis(diphosphate) + phosphate + H(+). The protein operates within purine metabolism; ppGpp biosynthesis; ppGpp from GTP: step 2/2. In terms of biological role, catalyzes the conversion of pppGpp to ppGpp. Guanosine pentaphosphate (pppGpp) is a cytoplasmic signaling molecule which together with ppGpp controls the 'stringent response', an adaptive process that allows bacteria to respond to amino acid starvation, resulting in the coordinated regulation of numerous cellular activities. This chain is Guanosine-5'-triphosphate,3'-diphosphate pyrophosphatase, found in Shigella flexneri serotype 5b (strain 8401).